The primary structure comprises 803 residues: Ribonuclease II, chloroplastic/mitochondrial (803 aa).

A chloroplast and mitochondrion-targeting transit peptide spans 1 to 35 (MMSVRAINGCSIIRTATSAGGPPVSLFRHRIQRLR). The RNB domain occupies 399-694 (RIDLTHLKVY…AHYQIKAFLR (296 aa)).

Belongs to the RNR ribonuclease family. In terms of tissue distribution, expressed in seedlings, roots, leaves and flowers.

The protein resides in the mitochondrion. It localises to the plastid. Its subcellular location is the chloroplast. It carries out the reaction Exonucleolytic cleavage in the 3'- to 5'-direction to yield nucleoside 5'-phosphates.. Its function is as follows. 3'-5' exoribonuclease that catalyzes 3' maturation of chloroplast and mitochondrion ribosomal RNAs; degrades short nucleotidic extensions to generate the mature 3'-ends. Involved in the maturation of 23S, 16S and 5S rRNAs. This chain is Ribonuclease II, chloroplastic/mitochondrial (RNR1), found in Arabidopsis thaliana (Mouse-ear cress).